Consider the following 387-residue polypeptide: Phosphoglycerate kinase (387 aa).

Substrate-binding positions include 21–23 (DLN), R36, 59–62 (HLGR), R113, and R146. Residues K197, E314, and 340-343 (GGDT) each bind ATP.

The protein belongs to the phosphoglycerate kinase family. As to quaternary structure, monomer.

It is found in the cytoplasm. It carries out the reaction (2R)-3-phosphoglycerate + ATP = (2R)-3-phospho-glyceroyl phosphate + ADP. The protein operates within carbohydrate degradation; glycolysis; pyruvate from D-glyceraldehyde 3-phosphate: step 2/5. The chain is Phosphoglycerate kinase from Pseudomonas entomophila (strain L48).